The sequence spans 279 residues: uncharacterized protein (279 aa).

The protein to M.tuberculosis Rv2569c.

This is an uncharacterized protein from Mycobacterium leprae (strain TN).